The sequence spans 295 residues: Ornithine carbamoyltransferase, catabolic (295 aa).

Carbamoyl phosphate is bound by residues 49–52 (STRT), Q76, R100, and 127–130 (HPCQ). L-ornithine contacts are provided by residues N155, D213, and 217–218 (SM). Carbamoyl phosphate contacts are provided by residues 253–254 (CL) and R281.

It belongs to the aspartate/ornithine carbamoyltransferase superfamily. OTCase family. Homohexamer.

The protein localises to the cytoplasm. The catalysed reaction is carbamoyl phosphate + L-ornithine = L-citrulline + phosphate + H(+). It participates in amino-acid degradation; L-arginine degradation via ADI pathway; carbamoyl phosphate from L-arginine: step 2/2. With respect to regulation, arginine lead to a slight activation. Inhibited by all nucleotide phosphates. In terms of biological role, reversibly catalyzes the transfer of the carbamoyl group from carbamoyl phosphate (CP) to the N(epsilon) atom of ornithine (ORN) to produce L-citrulline. The polypeptide is Ornithine carbamoyltransferase, catabolic (arcB) (Halobacterium salinarum (strain ATCC 700922 / JCM 11081 / NRC-1) (Halobacterium halobium)).